A 45-amino-acid polypeptide reads, in one-letter code: Metallothionein-like protein 1A (45 aa).

This sequence belongs to the metallothionein superfamily. Type 15 family. Expressed in phloem and mesophyll cells of leaves, vascular tissues of cotyledons, sepals and petals. Expressed in anthers. Expressed in root endodermis and at lower levels in cortex of mature region of roots.

In terms of biological role, metallothioneins have a high content of cysteine residues that bind various heavy metals. Functions as a metal chelator of copper (Cu) and zinc (Zn). Plays a role in Cu homeostasis in the roots under elevated Cu concentration. Functions cooperatively with the phytochelatin synthase PCS1 to protect plants from Cu and cadmium (Cd) toxicity. Plays a role in Cu homeostasis, specifically in the remobilization of Cu from senescing leaves. The mobilization of Cu from internal sources is important for seed development. Confers tolerance to Cd and plays a role in Cd and Zn homeostasis. The protein is Metallothionein-like protein 1A (MT1A) of Arabidopsis thaliana (Mouse-ear cress).